We begin with the raw amino-acid sequence, 185 residues long: Ribosome-recycling factor (185 aa).

The protein belongs to the RRF family.

It is found in the cytoplasm. Functionally, responsible for the release of ribosomes from messenger RNA at the termination of protein biosynthesis. May increase the efficiency of translation by recycling ribosomes from one round of translation to another. The protein is Ribosome-recycling factor of Azotobacter vinelandii (strain DJ / ATCC BAA-1303).